We begin with the raw amino-acid sequence, 472 residues long: Radical SAM cyclopropyl synthase TigE (472 aa).

Residues 106-331 enclose the Radical SAM core domain; that stretch reads GEQIKAIQLV…VIDLYEYGLD (226 aa). 11 residues coordinate [4Fe-4S] cluster: cysteine 120, cysteine 124, cysteine 127, tyrosine 339, cysteine 360, cysteine 378, cysteine 414, cysteine 417, cysteine 423, cysteine 427, and cysteine 446.

The protein belongs to the radical SAM superfamily. [4Fe-4S] cluster is required as a cofactor.

The enzyme catalyses L-isoleucyl-[protein] + AH2 + 2 S-adenosyl-L-methionine = methylcyclopropylglycine-[protein] + 2 5'-deoxyadenosine + 2 L-methionine + A + 2 H(+). In terms of biological role, radical S-adenosylmethionine (SAM) enzyme that catalyzes the formation of methylcyclopropylglycine (mCPG) residues from isoleucine residues residing in the repeating TIGSVS motif of the precursor peptide TigB. Is thus involved in the maturation of a ribosomally synthesized and post-translationally modified peptide (RiPP). The protein is Radical SAM cyclopropyl synthase TigE of Paramaledivibacter caminithermalis (strain DSM 15212 / CIP 107654 / DViRD3) (Clostridium caminithermale).